The sequence spans 191 residues: Peptidyl-tRNA hydrolase (191 aa).

Tyr-14 is a tRNA binding site. Residue His-19 is the Proton acceptor of the active site. Residues Tyr-65, Asn-67, and Asn-113 each coordinate tRNA.

Belongs to the PTH family. In terms of assembly, monomer.

It localises to the cytoplasm. The catalysed reaction is an N-acyl-L-alpha-aminoacyl-tRNA + H2O = an N-acyl-L-amino acid + a tRNA + H(+). Its function is as follows. Hydrolyzes ribosome-free peptidyl-tRNAs (with 1 or more amino acids incorporated), which drop off the ribosome during protein synthesis, or as a result of ribosome stalling. Functionally, catalyzes the release of premature peptidyl moieties from peptidyl-tRNA molecules trapped in stalled 50S ribosomal subunits, and thus maintains levels of free tRNAs and 50S ribosomes. This is Peptidyl-tRNA hydrolase from Nitrosospira multiformis (strain ATCC 25196 / NCIMB 11849 / C 71).